A 347-amino-acid polypeptide reads, in one-letter code: Phosphoribosylformylglycinamidine cyclo-ligase (347 aa).

Belongs to the AIR synthase family.

The protein resides in the cytoplasm. It catalyses the reaction 2-formamido-N(1)-(5-O-phospho-beta-D-ribosyl)acetamidine + ATP = 5-amino-1-(5-phospho-beta-D-ribosyl)imidazole + ADP + phosphate + H(+). It functions in the pathway purine metabolism; IMP biosynthesis via de novo pathway; 5-amino-1-(5-phospho-D-ribosyl)imidazole from N(2)-formyl-N(1)-(5-phospho-D-ribosyl)glycinamide: step 2/2. The sequence is that of Phosphoribosylformylglycinamidine cyclo-ligase from Alkaliphilus metalliredigens (strain QYMF).